We begin with the raw amino-acid sequence, 417 residues long: Phosphoglycerate kinase 1 (417 aa).

Position 2 is an N-acetylserine (Ser-2). Phosphoserine is present on residues Ser-2 and Ser-4. Positions 2-186 (SLSNKLTLDK…VGVNLPQKAG (185 aa)) are globular domain-1. Lys-6 is modified (N6-succinyllysine). Residue Lys-11 is modified to N6-acetyllysine. The (2R)-3-phosphoglycerate site is built by Val-23, Asp-24, Phe-25, Asn-26, Gln-38, and Arg-39. Residues 38 to 43 (QRIKAA) are mitochondrial targeting region exposed following cis-trans isomerization by PIN1 and recognized by the TOM complex for mitochondrial translocation of the protein. Lys-48 is modified (N6-acetyllysine; alternate). Position 48 is an N6-succinyllysine; alternate (Lys-48). (2R)-3-phosphoglycerate is bound by residues Ser-62, His-63, Gly-65, and Arg-66. Lys-75 is subject to N6-acetyllysine. Tyr-76 is modified (phosphotyrosine). Residues Lys-86 and Lys-91 each carry the N6-acetyllysine modification. Lys-97 is subject to N6-acetyllysine; alternate. The residue at position 97 (Lys-97) is an N6-(2-hydroxyisobutyryl)lysine; alternate. Residues Leu-122 and Arg-123 each coordinate (2R)-3-phosphoglycerate. Lys-131 carries the N6-acetyllysine; alternate modification. N6-malonyllysine; alternate is present on Lys-131. At Lys-146 the chain carries N6-acetyllysine. 2 residues coordinate (2R)-3-phosphoglycerate: His-170 and Arg-171. A linker region spans residues 187–190 (GFLM). The residue at position 191 (Lys-191) is an N6-succinyllysine. A globular domain-2 region spans residues 191 to 417 (KKELNYFAKA…LPGVDALSNV (227 aa)). Phosphotyrosine is present on Tyr-196. At Lys-199 the chain carries N6-acetyllysine. The residue at position 203 (Ser-203) is a Phosphoserine. Position 214 (Gly-214) interacts with ADP. Gly-214 is a CDP binding site. AMP contacts are provided by Ala-215 and Lys-216. Ala-215 contacts ATP. Ala-215 contributes to the Mg(2+) binding site. Lys-216 carries the N6-(2-hydroxyisobutyryl)lysine modification. Mg(2+) is bound by residues Ala-218 and Asp-219. Asp-219 contacts CDP. Lys-220 is an AMP binding site. Lys-220 is a binding site for ATP. Lys-220 is modified (N6-(2-hydroxyisobutyryl)lysine). Gly-238 contributes to the ADP binding site. Position 238 (Gly-238) interacts with CDP. An AMP-binding site is contributed by Gly-239. Gly-239 contributes to the ATP binding site. Lys-267 and Lys-291 each carry N6-acetyllysine. Residue Gly-313 participates in AMP binding. Gly-313 is a binding site for ATP. At Lys-323 the chain carries N6-(2-hydroxyisobutyryl)lysine. Residues Gly-338, Val-340, and Phe-343 each coordinate CDP. An ADP-binding site is contributed by Phe-343. Glu-344 contributes to the AMP binding site. Position 344 (Glu-344) interacts with ATP. An N6-acetyllysine modification is found at Lys-361. Asp-375 and Thr-376 together coordinate ATP. Mg(2+) is bound at residue Asp-375. An associated with globular domain 1 region spans residues 406-417 (KVLPGVDALSNV).

This sequence belongs to the phosphoglycerate kinase family. As to quaternary structure, monomer. Interacts with kinase MAPK1/ERK2; the interaction is direct, occurs under hypoxic conditions, and promotes its interaction with PIN1. Interacts with peptidyl-prolyl cis-trans isomerase PIN1; the interaction is direct, occurs under hypoxic conditions, and targets the protein to the mitochondrion by promoting interactions with the TOM complex. Interacts with mitochondrial circRNA mcPGK1 (via its 2nd stem-loop); the interaction is direct and targets the protein to the mitochondrion by promoting interactions with the TOM complex. Interacts with pyruvate dehydrogenase kinase PDK1; the interaction is direct, occurs under hypoxic conditions and leads to PDK1-mediated inhibition of pyruvate dehydrogenase complex activity. Mg(2+) is required as a cofactor. Phosphorylated at Ser-203 by MAPK1/ERK2 under hypoxic conditions, which promotes its mitochondrial targeting.

The protein resides in the cytoplasm. It is found in the cytosol. Its subcellular location is the mitochondrion matrix. It carries out the reaction (2R)-3-phosphoglycerate + ATP = (2R)-3-phospho-glyceroyl phosphate + ADP. The catalysed reaction is L-seryl-[protein] + ATP = O-phospho-L-seryl-[protein] + ADP + H(+). The protein operates within carbohydrate degradation; glycolysis; pyruvate from D-glyceraldehyde 3-phosphate: step 2/5. Functionally, catalyzes one of the two ATP producing reactions in the glycolytic pathway via the reversible conversion of 1,3-diphosphoglycerate to 3-phosphoglycerate. Both L- and D- forms of purine and pyrimidine nucleotides can be used as substrates, but the activity is much lower on pyrimidines. In addition to its role as a glycolytic enzyme, it seems that PGK-1 acts as a polymerase alpha cofactor protein (primer recognition protein). Acts as a protein kinase when localized to the mitochondrion where it phosphorylates pyruvate dehydrogenase kinase PDK1 to inhibit pyruvate dehydrogenase complex activity and suppress the formation of acetyl-coenzyme A from pyruvate, and consequently inhibit oxidative phosphorylation and promote glycolysis. May play a role in sperm motility. The sequence is that of Phosphoglycerate kinase 1 (PGK1) from Equus caballus (Horse).